The primary structure comprises 352 residues: NADH-ubiquinone oxidoreductase chain 2 (352 aa).

12 helical membrane-spanning segments follow: residues 4–24 (IVST…VSSE), 26–46 (WFII…ILCS), 67–87 (AALL…WSIL), 96–116 (ICLS…FWFP), 124–144 (FFQG…LMFY), 148–168 (LGFS…GGWG), 177–197 (KILA…SAYS), 198–218 (FNAA…LFLL), 241–261 (VALV…TGFI), 264–284 (FTSL…IMII), 290–310 (YFFY…QHII), and 332–352 (SVST…YIIT).

The protein belongs to the complex I subunit 2 family.

It is found in the mitochondrion inner membrane. It carries out the reaction a ubiquinone + NADH + 5 H(+)(in) = a ubiquinol + NAD(+) + 4 H(+)(out). Core subunit of the mitochondrial membrane respiratory chain NADH dehydrogenase (Complex I) that is believed to belong to the minimal assembly required for catalysis. Complex I functions in the transfer of electrons from NADH to the respiratory chain. The immediate electron acceptor for the enzyme is believed to be ubiquinone. This chain is NADH-ubiquinone oxidoreductase chain 2 (ND2), found in Strongylocentrotus purpuratus (Purple sea urchin).